The primary structure comprises 148 residues: Cysteine proteinase inhibitor 5 (148 aa).

A signal peptide spans 1-25 (MASKLYYAVAPLVLVLLLLAPLSSA). Residues 99 to 103 (QVVSG) carry the Secondary area of contact motif.

The protein belongs to the cystatin family. Phytocystatin subfamily.

The protein localises to the secreted. Its function is as follows. Specific inhibitor of cysteine proteinases. Probably involved in the regulation of endogenous processes and in defense against pests and pathogens. The polypeptide is Cysteine proteinase inhibitor 5 (Oryza sativa subsp. japonica (Rice)).